A 464-amino-acid chain; its full sequence is DNA primase DnaG (464 aa).

The Toprim domain occupies 198 to 272; it reads DSIIVVEGRA…DVDYVARAPE (75 aa). Mg(2+)-binding residues include glutamate 204, aspartate 246, and aspartate 248. Basic and acidic residues predominate over residues 315 to 333; sequence RESEGERQPRQVTKPEPEV. A disordered region spans residues 315–351; it reads RESEGERQPRQVTKPEPEVVKAQPKAETPEEKREPAT.

This sequence belongs to the archaeal DnaG primase family. Forms a ternary complex with MCM helicase and DNA. Component of the archaeal exosome complex. Requires Mg(2+) as cofactor.

It carries out the reaction ssDNA + n NTP = ssDNA/pppN(pN)n-1 hybrid + (n-1) diphosphate.. RNA polymerase that catalyzes the synthesis of short RNA molecules used as primers for DNA polymerase during DNA replication. Also part of the exosome, which is a complex involved in RNA degradation. Acts as a poly(A)-binding protein that enhances the interaction between heteromeric, adenine-rich transcripts and the exosome. The chain is DNA primase DnaG from Thermococcus kodakarensis (strain ATCC BAA-918 / JCM 12380 / KOD1) (Pyrococcus kodakaraensis (strain KOD1)).